We begin with the raw amino-acid sequence, 391 residues long: 3-ketoacyl-CoA thiolase (391 aa).

Cysteine 95 functions as the Acyl-thioester intermediate in the catalytic mechanism. Catalysis depends on proton acceptor residues histidine 347 and cysteine 377.

It belongs to the thiolase-like superfamily. Thiolase family. Heterotetramer of two alpha chains (FadB) and two beta chains (FadA).

Its subcellular location is the cytoplasm. The enzyme catalyses an acyl-CoA + acetyl-CoA = a 3-oxoacyl-CoA + CoA. It functions in the pathway lipid metabolism; fatty acid beta-oxidation. Its function is as follows. Catalyzes the final step of fatty acid oxidation in which acetyl-CoA is released and the CoA ester of a fatty acid two carbons shorter is formed. This chain is 3-ketoacyl-CoA thiolase, found in Marinobacter nauticus (strain ATCC 700491 / DSM 11845 / VT8) (Marinobacter aquaeolei).